The following is a 698-amino-acid chain: Polyribonucleotide nucleotidyltransferase (698 aa).

Mg(2+) contacts are provided by Asp-485 and Asp-491. In terms of domain architecture, KH spans 552–611 (PRITTIKINPEKIRDVIGKGGAVIRALTEETGTTIELDDDGTVKIASSNGEATKEAIRRI). The S1 motif domain occupies 621-689 (GRVYNGKVIR…RQGRVRLSIK (69 aa)).

It belongs to the polyribonucleotide nucleotidyltransferase family. Component of the RNA degradosome, which is a multiprotein complex involved in RNA processing and mRNA degradation. It depends on Mg(2+) as a cofactor.

The protein localises to the cytoplasm. The enzyme catalyses RNA(n+1) + phosphate = RNA(n) + a ribonucleoside 5'-diphosphate. In terms of biological role, involved in mRNA degradation. Catalyzes the phosphorolysis of single-stranded polyribonucleotides processively in the 3'- to 5'-direction. This Shewanella denitrificans (strain OS217 / ATCC BAA-1090 / DSM 15013) protein is Polyribonucleotide nucleotidyltransferase.